The sequence spans 332 residues: MVKNTVKHVDSSKHLEKVASLIKEGKVKKICVMVGAGISTAAGIPDFRSPETGIYNNLQRFNLPYAEAVFDLSYFRKNPRPFYELAHELMPEKYRPTYTHYFIRLLHDKRLLQKCYTQNIDTLERLAGVPDKALIEAHGSFQYSRCIECYEMAETEYVRACIMQKQVPKCNSCKGLIKPMIVFYGEGLPMRFFEHMEKDTKVCDMALVIGTSLLVHPFADLPEIVPNKCQRVLINREPAGDFGERKKDIMILGDCDSQVRALCKLLGWSDELEKLIDTSVETLTEEISLLSVDSTIEKNASEQKKDDNSVNPFTKIEEKKKDEVTLLVSDDE.

In terms of domain architecture, Deacetylase sirtuin-type spans 7–269; the sequence is KHVDSSKHLE…RALCKLLGWS (263 aa). NAD(+) contacts are provided by residues 35 to 55 and 118 to 121; these read GAGI…TGIY and QNID. Residue His138 is the Proton acceptor of the active site. Cys146, Cys149, Cys170, and Cys173 together coordinate Zn(2+). NAD(+)-binding positions include 210-212, 235-237, and Cys255; these read GTS and NRE.

This sequence belongs to the sirtuin family. Class I subfamily. The cofactor is Zn(2+).

The protein resides in the cytoplasm. Its subcellular location is the nucleus. The catalysed reaction is N(6)-acetyl-L-lysyl-[protein] + NAD(+) + H2O = 2''-O-acetyl-ADP-D-ribose + nicotinamide + L-lysyl-[protein]. NAD-dependent histone deacetylase, which could function in telomeric silencing, cell cycle progression and chromosome stability. This Schizosaccharomyces pombe (strain 972 / ATCC 24843) (Fission yeast) protein is NAD-dependent protein deacetylase hst2 (hst2).